The chain runs to 187 residues: Imidazoleglycerol-phosphate dehydratase (187 aa).

Belongs to the imidazoleglycerol-phosphate dehydratase family.

The protein resides in the cytoplasm. The catalysed reaction is D-erythro-1-(imidazol-4-yl)glycerol 3-phosphate = 3-(imidazol-4-yl)-2-oxopropyl phosphate + H2O. The protein operates within amino-acid biosynthesis; L-histidine biosynthesis; L-histidine from 5-phospho-alpha-D-ribose 1-diphosphate: step 6/9. The polypeptide is Imidazoleglycerol-phosphate dehydratase (Pyrobaculum calidifontis (strain DSM 21063 / JCM 11548 / VA1)).